A 252-amino-acid chain; its full sequence is 3-dehydroquinate dehydratase (252 aa).

Residues 47–49 (EWR) and arginine 83 contribute to the 3-dehydroquinate site. Histidine 144 (proton donor/acceptor) is an active-site residue. Lysine 171 functions as the Schiff-base intermediate with substrate in the catalytic mechanism. Positions 213, 232, and 236 each coordinate 3-dehydroquinate.

Belongs to the type-I 3-dehydroquinase family. As to quaternary structure, homodimer.

It carries out the reaction 3-dehydroquinate = 3-dehydroshikimate + H2O. Its pathway is metabolic intermediate biosynthesis; chorismate biosynthesis; chorismate from D-erythrose 4-phosphate and phosphoenolpyruvate: step 3/7. Involved in the third step of the chorismate pathway, which leads to the biosynthesis of aromatic amino acids. Catalyzes the cis-dehydration of 3-dehydroquinate (DHQ) and introduces the first double bond of the aromatic ring to yield 3-dehydroshikimate. This chain is 3-dehydroquinate dehydratase, found in Lactiplantibacillus plantarum (strain ATCC BAA-793 / NCIMB 8826 / WCFS1) (Lactobacillus plantarum).